A 225-amino-acid chain; its full sequence is Ribonuclease 3 (225 aa).

Positions 5-127 constitute an RNase III domain; that stretch reads MNKLTSKLGY…IIGAIYLDSD (123 aa). E40 contacts Mg(2+). The active site involves D44. Residues D113 and E116 each contribute to the Mg(2+) site. Residue E116 is part of the active site. Residues 154–224 enclose the DRBM domain; it reads DPKTRLQEFL…AETALEQLTN (71 aa).

It belongs to the ribonuclease III family. In terms of assembly, homodimer. It depends on Mg(2+) as a cofactor.

The protein resides in the cytoplasm. It carries out the reaction Endonucleolytic cleavage to 5'-phosphomonoester.. In terms of biological role, digests double-stranded RNA. Involved in the processing of primary rRNA transcript to yield the immediate precursors to the large and small rRNAs (23S and 16S). Processes some mRNAs, and tRNAs when they are encoded in the rRNA operon. Processes pre-crRNA and tracrRNA of type II CRISPR loci if present in the organism. The polypeptide is Ribonuclease 3 (Vibrio cholerae serotype O1 (strain ATCC 39315 / El Tor Inaba N16961)).